The following is a 235-amino-acid chain: UPF0702 transmembrane protein YdfS (235 aa).

Transmembrane regions (helical) follow at residues 32-52 (MTIF…GLAY) and 60-80 (NMAI…FLSI).

Belongs to the UPF0702 family.

It localises to the cell membrane. In Bacillus subtilis (strain 168), this protein is UPF0702 transmembrane protein YdfS (ydfS).